A 213-amino-acid chain; its full sequence is Amelotin (213 aa).

The signal sequence occupies residues 1-16; sequence MKTMILLLCLLGSAQS. Disordered stretches follow at residues 22 to 43 and 162 to 213; these read NPASGVPATKPTPGQVTPLPQQ and GAKA…NRTQ. The segment covering 33-43 has biased composition (polar residues); the sequence is TPGQVTPLPQQ. Low complexity predominate over residues 169 to 180; sequence GTTPGHVTTPGV.

The protein belongs to the amelotin family. Phosphorylated by FAM20C in vitro. Post-translationally, O-glycosylated. As to expression, specifically expressed in maturation-stage ameloblasts.

Its subcellular location is the secreted. Functionally, is a promoter of calcium phosphate mineralization, playing a critical role in the formation of the compact, mineralized, aprismatic enamel surface layer during the maturation stage of amelogenesis. This chain is Amelotin (Amtn), found in Mus musculus (Mouse).